We begin with the raw amino-acid sequence, 375 residues long: Actin-related protein T1 (375 aa).

Belongs to the actin family.

The protein localises to the cytoplasm. It localises to the cytoskeleton. It is found in the nucleus. Its subcellular location is the cytoplasmic vesicle. The protein resides in the secretory vesicle. The protein localises to the acrosome. Negatively regulates the Hedgehog (SHH) signaling. Binds to the promoter of the SHH signaling mediator, GLI1, and inhibits its expression. In Macaca fascicularis (Crab-eating macaque), this protein is Actin-related protein T1 (ACTRT1).